The primary structure comprises 363 residues: Cytochrome b (363 aa).

A run of 4 helical transmembrane segments spans residues 23-43 (FGFI…MLSF), 67-89 (WFVR…LHIM), 102-122 (SWYS…VGYV), and 164-184 (FFSI…FHLY). Heme b-binding residues include His73 and His87. 2 residues coordinate heme b: His168 and His182. His187 is a binding site for a ubiquinone. 4 helical membrane passes run 210–230 (VLFS…VQSG), 271–291 (VFPT…LLVL), 310–330 (VWTT…SIGK), and 332–352 (VVHV…VLFI).

The protein belongs to the cytochrome b family. As to quaternary structure, the main subunits of complex b-c1 are: cytochrome b, cytochrome c1 and the Rieske protein. Heme b serves as cofactor.

The protein localises to the mitochondrion inner membrane. Component of the ubiquinol-cytochrome c reductase complex (complex III or cytochrome b-c1 complex) that is part of the mitochondrial respiratory chain. The b-c1 complex mediates electron transfer from ubiquinol to cytochrome c. Contributes to the generation of a proton gradient across the mitochondrial membrane that is then used for ATP synthesis. The polypeptide is Cytochrome b (MT-CYB) (Theileria annulata).